Reading from the N-terminus, the 75-residue chain is Sec-independent protein translocase protein TatA (75 aa).

Residues 1–21 form a helical membrane-spanning segment; sequence MFGLSPAQLIILLVVILLIFG.

Belongs to the TatA/E family. In terms of assembly, the Tat system comprises two distinct complexes: a TatABC complex, containing multiple copies of TatA, TatB and TatC subunits, and a separate TatA complex, containing only TatA subunits. Substrates initially bind to the TatABC complex, which probably triggers association of the separate TatA complex to form the active translocon.

The protein localises to the cell inner membrane. In terms of biological role, part of the twin-arginine translocation (Tat) system that transports large folded proteins containing a characteristic twin-arginine motif in their signal peptide across membranes. TatA could form the protein-conducting channel of the Tat system. The protein is Sec-independent protein translocase protein TatA of Haemophilus influenzae (strain PittEE).